Consider the following 178-residue polypeptide: Nicotinamide-nucleotide adenylyltransferase (178 aa).

This sequence belongs to the archaeal NMN adenylyltransferase family.

It is found in the cytoplasm. It catalyses the reaction beta-nicotinamide D-ribonucleotide + ATP + H(+) = diphosphate + NAD(+). It participates in cofactor biosynthesis; NAD(+) biosynthesis; NAD(+) from nicotinamide D-ribonucleotide: step 1/1. This Caldivirga maquilingensis (strain ATCC 700844 / DSM 13496 / JCM 10307 / IC-167) protein is Nicotinamide-nucleotide adenylyltransferase.